The following is a 138-amino-acid chain: uncharacterized protein (138 aa).

3 helical membrane-spanning segments follow: residues 8-28 (LIIQ…AFLP), 47-67 (FIIC…TIIV), and 82-102 (TLPV…IAFI).

The protein to U.parvum UU007, UU008 and UU041.

Its subcellular location is the cell membrane. This is an uncharacterized protein from Ureaplasma parvum serovar 3 (strain ATCC 700970).